Reading from the N-terminus, the 1202-residue chain is DNA-directed RNA polymerase subunit beta (1202 aa).

Residues 1151-1162 show a composition bias toward acidic residues; that stretch reads LRDMDEEDDDVV. Residues 1151–1202 form a disordered region; that stretch reads LRDMDEEDDDVVNVDALSKYAEKQNEKTNASAEEAKAPSTESAPVETKNNQN. A compositionally biased stretch (polar residues) spans 1189 to 1202; sequence STESAPVETKNNQN.

It belongs to the RNA polymerase beta chain family. The RNAP catalytic core consists of 2 alpha, 1 beta, 1 beta' and 1 omega subunit. When a sigma factor is associated with the core the holoenzyme is formed, which can initiate transcription.

It catalyses the reaction RNA(n) + a ribonucleoside 5'-triphosphate = RNA(n+1) + diphosphate. Its function is as follows. DNA-dependent RNA polymerase catalyzes the transcription of DNA into RNA using the four ribonucleoside triphosphates as substrates. The polypeptide is DNA-directed RNA polymerase subunit beta (Pediococcus pentosaceus (strain ATCC 25745 / CCUG 21536 / LMG 10740 / 183-1w)).